An 825-amino-acid chain; its full sequence is Putative NAD(+)--arginine ADP-ribosyltransferase Mav (825 aa).

Positions 435–673 (ALKGLKKPPG…SGSDHHLPLH (239 aa)) are disordered. Composition is skewed to pro residues over residues 443-457 (PGVP…PAAP) and 468-491 (SGKP…PLPH). Over residues 560–579 (PAADTPAPSAPAASMSAASG) the composition is skewed to low complexity. A compositionally biased stretch (pro residues) spans 580 to 589 (PPMPPTPSLP). The segment covering 590–599 (EPASLPSGPS) has biased composition (low complexity). In terms of domain architecture, TR mART core spans 650 to 825 (KNANGHGPHD…GRTIIEMIER (176 aa)). The span at 656–670 (GPHDASLDSGSDHHL) shows a compositional bias: basic and acidic residues. NAD(+) is bound by residues 687-699 (TGPG…FALR), 730-733 (RGTN), and E750. R730 is an active-site residue. Catalysis depends on residues S755 and E795. E795 lines the NAD(+) pocket.

This sequence belongs to the Arg-specific ADP-ribosyltransferase family.

The protein localises to the secreted. The enzyme catalyses L-arginyl-[protein] + NAD(+) = N(omega)-(ADP-D-ribosyl)-L-arginyl-[protein] + nicotinamide + H(+). A probable mono(ADP-ribosyl)transferase, it may ADP-ribosylate Arg in target protein(s). This chain is Putative NAD(+)--arginine ADP-ribosyltransferase Mav, found in Mycobacterium avium (strain 104).